Reading from the N-terminus, the 331-residue chain is Pantothenate kinase (331 aa).

109-116 (GSVAVGKS) lines the ATP pocket.

The protein belongs to the prokaryotic pantothenate kinase family.

It is found in the cytoplasm. It catalyses the reaction (R)-pantothenate + ATP = (R)-4'-phosphopantothenate + ADP + H(+). The protein operates within cofactor biosynthesis; coenzyme A biosynthesis; CoA from (R)-pantothenate: step 1/5. The chain is Pantothenate kinase from Rhizobium johnstonii (strain DSM 114642 / LMG 32736 / 3841) (Rhizobium leguminosarum bv. viciae).